We begin with the raw amino-acid sequence, 520 residues long: Arabinose import ATP-binding protein AraG (520 aa).

The span at 1–10 (MTTQTMTAVS) shows a compositional bias: polar residues. The disordered stretch occupies residues 1–27 (MTTQTMTAVSGNDGDTGGDAAESPPGG). 2 ABC transporter domains span residues 30 to 265 (LALD…MVGR) and 265 to 516 (RSIE…LIKL). 62-69 (GENGAGKS) is an ATP binding site.

The protein belongs to the ABC transporter superfamily. Arabinose importer (TC 3.A.1.2.2) family. In terms of assembly, the complex is composed of two ATP-binding proteins (AraG), two transmembrane proteins (AraH) and a solute-binding protein (AraF).

It is found in the cell inner membrane. The enzyme catalyses L-arabinose(out) + ATP + H2O = L-arabinose(in) + ADP + phosphate + H(+). In terms of biological role, part of the ABC transporter complex AraFGH involved in L-arabinose import. Responsible for energy coupling to the transport system. This chain is Arabinose import ATP-binding protein AraG, found in Azospirillum brasilense.